A 304-amino-acid chain; its full sequence is GTPase Era (304 aa).

In terms of domain architecture, Era-type G spans 7–178 (KCGVVAVLGA…KNALAALMPE (172 aa)). The G1 stretch occupies residues 15-22 (GAPNAGKS). 15–22 (GAPNAGKS) contacts GTP. The tract at residues 41–45 (QTTRA) is G2. The segment at 66–69 (DTPG) is G3. Residues 66–70 (DTPGI) and 128–131 (NKVD) contribute to the GTP site. The interval 128 to 131 (NKVD) is G4. Residues 157–159 (VSA) are G5. The KH type-2 domain maps to 209-286 (LHEELPYDSA…HLFLHVKVDE (78 aa)).

It belongs to the TRAFAC class TrmE-Era-EngA-EngB-Septin-like GTPase superfamily. Era GTPase family. Monomer.

It localises to the cytoplasm. It is found in the cell inner membrane. In terms of biological role, an essential GTPase that binds both GDP and GTP, with rapid nucleotide exchange. Plays a role in 16S rRNA processing and 30S ribosomal subunit biogenesis and possibly also in cell cycle regulation and energy metabolism. This chain is GTPase Era, found in Erythrobacter litoralis (strain HTCC2594).